The chain runs to 917 residues: Serine/arginine repetitive matrix protein 1 (917 aa).

At Met-1 the chain carries N-acetylmethionine. The segment at 1–151 (MDAGFFRGTS…ASMKKQDEDK (151 aa)) is necessary for DNA and RNA-binding. A necessary for mRNA 3'-end cleavage and cytoplasmic accumulation region spans residues 1-156 (MDAGFFRGTS…QDEDKDKRDK (156 aa)). Arg-7 carries the citrulline modification. One can recognise a PWI domain in the interval 27-126 (QLKFAECLEK…AGIPSAFLEL (100 aa)). Lys-127 participates in a covalent cross-link: Glycyl lysine isopeptide (Lys-Gly) (interchain with G-Cter in SUMO2). Residues 139-170 (EKLASMKKQDEDKDKRDKEEKESSREKRERSR) show a composition bias toward basic and acidic residues. Positions 139 to 917 (EKLASMKKQD…MRKAQVSPQS (779 aa)) are disordered. Lys-140 carries the N6-acetyllysine modification. A compositionally biased stretch (basic residues) spans 171 to 207 (SPRRRKSRSPSPRRRSSPVRRERKRSHSRSPRHRTKS). Positions 214–234 (PEKKEKTPELPEPSVKVKEPS) are enriched in basic and acidic residues. The residue at position 220 (Thr-220) is a Phosphothreonine. A Phosphoserine modification is found at Ser-227. A Glycyl lysine isopeptide (Lys-Gly) (interchain with G-Cter in SUMO1); alternate cross-link involves residue Lys-231. Residue Lys-231 forms a Glycyl lysine isopeptide (Lys-Gly) (interchain with G-Cter in SUMO2); alternate linkage. Phosphoserine is present on residues Ser-234 and Ser-240. Thr-241 is modified (phosphothreonine). Over residues 246–275 (KVPKPEPIPEPKEPSPEKNSKKEKEKEKTR) the composition is skewed to basic and acidic residues. Residue Lys-249 forms a Glycyl lysine isopeptide (Lys-Gly) (interchain with G-Cter in SUMO2) linkage. At Ser-260 the chain carries Phosphoserine. Composition is skewed to basic residues over residues 276–329 (PRSR…RTPP) and 336–351 (PRHRRSRSPVRRRRRS). A necessary for speckles and matrix localization region spans residues 300-702 (RRHRSRSRSY…NKRHSPSPRP (403 aa)). Positions 352–368 (SASLSGSSSSSSSSRSR) are enriched in low complexity. 4 positions are modified to phosphoserine: Ser-389, Ser-391, Ser-393, and Ser-402. Residue Thr-406 is modified to Phosphothreonine. Ser-414 is subject to Phosphoserine. Thr-416 is modified (phosphothreonine). Ser-420, Ser-429, Ser-431, and Ser-436 each carry phosphoserine. Residues 428–438 (VSVSPGRTSGK) are compositionally biased toward polar residues. Residue Lys-447 forms a Glycyl lysine isopeptide (Lys-Gly) (interchain with G-Cter in SUMO2) linkage. Ser-450 and Ser-452 each carry phosphoserine. A Glycyl lysine isopeptide (Lys-Gly) (interchain with G-Cter in SUMO2) cross-link involves residue Lys-459. 2 positions are modified to phosphoserine: Ser-463 and Ser-465. Lys-472 is covalently cross-linked (Glycyl lysine isopeptide (Lys-Gly) (interchain with G-Cter in SUMO2)). Residue Ser-478 is modified to Phosphoserine. A compositionally biased stretch (low complexity) spans 478 to 501 (SVQQRRQYRRQNQQSSSDSGSSSS). Positions 503–518 (EDERPKRSHVKNGEVG) are enriched in basic and acidic residues. Phosphoserine occurs at positions 524, 526, 528, 530, 532, 563, and 565. Residues 557 to 574 (SGRRRRSPSPPPTRRRRS) show a composition bias toward basic residues. Residue Thr-569 is modified to Phosphothreonine. Phosphoserine is present on residues Ser-574 and Ser-576. The span at 581 to 606 (PRRRRTPTPPPRRRTPSPPPRRRSPS) shows a compositional bias: basic residues. Thr-586, Thr-588, and Thr-595 each carry phosphothreonine. Ser-597 carries the phosphoserine modification. Residues 607 to 619 (PRRYSPPIQRRYS) are compositionally biased toward low complexity. Tyr-610 carries the post-translational modification Phosphotyrosine. A phosphoserine mark is found at Ser-611, Ser-619, and Ser-621. Thr-628 is modified (phosphothreonine). Phosphoserine is present on residues Ser-630, Ser-640, Ser-642, Ser-650, and Ser-652. Over residues 635 to 650 (PKRRASPSPPPKRRVS) the composition is skewed to basic residues. Residues 663–677 (TKRRSPSLSSKHRKG) are compositionally biased toward basic residues. Pro residues predominate over residues 699–713 (SPRPRAPQTSSPPPV). 6 positions are modified to phosphoserine: Ser-708, Ser-709, Ser-718, Ser-720, Ser-726, and Ser-728. Composition is skewed to low complexity over residues 714-732 (RRGASSSPQRRQSPSPSTR), 749-772 (AASPSPQSVRRVSSSRSVSGSPEP), and 782-799 (SPVQSQSPSTNWSPAVPV). Position 731 is a phosphothreonine (Thr-731). Residues Ser-751, Ser-753, Ser-761, Ser-765, Ser-767, Ser-769, Ser-782, Ser-786, Ser-788, and Ser-790 each carry the phosphoserine modification. At Thr-791 the chain carries Phosphothreonine. Residues Ser-794 and Ser-804 each carry the phosphoserine modification. Phosphothreonine is present on Thr-806. A phosphoserine mark is found at Ser-808, Ser-810, and Ser-815. Residues 822-847 (KKKKKKKDKKHKKDKKHKKHKKHKKE) are compositionally biased toward basic residues. Over residues 850–879 (VAAAAAAAVTPAAIAAATTTLAQEEPVAAP) the composition is skewed to low complexity. Lys-882 participates in a covalent cross-link: Glycyl lysine isopeptide (Lys-Gly) (interchain with G-Cter in SUMO2). Position 885 is a phosphothreonine (Thr-885). Position 887 is a phosphoserine (Ser-887). Residues 895–905 (DLEKHLREKAL) are compositionally biased toward basic and acidic residues. At Ser-914 the chain carries Phosphoserine.

It belongs to the splicing factor SR family. Identified in the spliceosome C complex. Found in a pre-mRNA splicing complex with SFRS4, SFRS5, SNRP70, SNRPA1, SRRM1 and SRRM2. Component of the minor spliceosome, which splices U12-type introns. Found in a pre-mRNA exonic splicing enhancer (ESE) complex with SNRP70, SNRPA1, SRRM1 and TRA2B/SFRS10. Found in a mRNA splicing-dependent exon junction complex (EJC) with DEK, PRPF8, NCBP1, RBM8A, RNPS1, SRRM1 and ALYREF/THOC4. Interacts with DDX39B, CPSF1, RBM8A, RNPS1, and ALYREF/THOC4. Seems to be a compound of RNA export complexes that are released from speckles in a ATP-dependent manner. In terms of processing, phosphorylated on multiple serine and threonine residues by DYRK3 during the G2-to-M transition, after the nuclear-envelope breakdown. Phosphorylation by DYRK3 promotes disassembly of nuclear speckles. Post-translationally, citrullinated by PADI4.

Its function is as follows. Part of pre- and post-splicing multiprotein mRNP complexes. As a component of the minor spliceosome, involved in the splicing of U12-type introns in pre-mRNAs. Involved in numerous pre-mRNA processing events. Promotes constitutive and exonic splicing enhancer (ESE)-dependent splicing activation by bridging together sequence-specific (SR family proteins, SFRS4, SFRS5 and TRA2B/SFRS10) and basal snRNP (SNRP70 and SNRPA1) factors of the spliceosome. Stimulates mRNA 3'-end cleavage independently of the formation of an exon junction complex. Binds both pre-mRNA and spliced mRNA 20-25 nt upstream of exon-exon junctions. Binds RNA and DNA with low sequence specificity and has similar preference for either double- or single-stranded nucleic acid substrates. The polypeptide is Serine/arginine repetitive matrix protein 1 (SRRM1) (Pongo abelii (Sumatran orangutan)).